Reading from the N-terminus, the 62-residue chain is Small ribosomal subunit protein eS31 (62 aa).

The Zn(2+) site is built by cysteine 29, cysteine 32, cysteine 48, and cysteine 51. The C4-type zinc-finger motif lies at cysteine 29 to cysteine 51.

Belongs to the eukaryotic ribosomal protein eS31 family. As to quaternary structure, part of the 30S ribosomal subunit. Requires Zn(2+) as cofactor.

In Hyperthermus butylicus (strain DSM 5456 / JCM 9403 / PLM1-5), this protein is Small ribosomal subunit protein eS31.